A 367-amino-acid polypeptide reads, in one-letter code: Alanine racemase (367 aa).

The Proton acceptor; specific for D-alanine role is filled by K40. The residue at position 40 (K40) is an N6-(pyridoxal phosphate)lysine. R136 serves as a coordination point for substrate. Residue Y263 is the Proton acceptor; specific for L-alanine of the active site. Residue M310 participates in substrate binding.

It belongs to the alanine racemase family. The cofactor is pyridoxal 5'-phosphate.

It carries out the reaction L-alanine = D-alanine. It functions in the pathway amino-acid biosynthesis; D-alanine biosynthesis; D-alanine from L-alanine: step 1/1. Its function is as follows. Catalyzes the interconversion of L-alanine and D-alanine. May also act on other amino acids. This is Alanine racemase (alr) from Streptococcus thermophilus (strain CNRZ 1066).